The sequence spans 367 residues: Dihydroxyacetone phosphate transaminase Cj1437c (367 aa).

At lysine 219 the chain carries N6-(pyridoxal phosphate)lysine.

The protein belongs to the class-II pyridoxal-phosphate-dependent aminotransferase family. Pyridoxal 5'-phosphate is required as a cofactor.

The catalysed reaction is dihydroxyacetone phosphate + L-glutamate = (S)-serinol phosphate + 2-oxoglutarate. It participates in capsule biogenesis; capsule polysaccharide biosynthesis. In terms of biological role, pyridoxal phosphate (PLP)-dependent transaminase involved in the biosynthesis of amidated D-glucuronic acid structures found on the capsular polysaccharide (CPS) of C.jejuni. Catalyzes the transamination of dihydroxyacetone phosphate (DHAP) to (S)-serinol phosphate in the presence of L-glutamate. Less active with L-aspartate. No activity with dihydroxyacetone or L-alanine. The sequence is that of Dihydroxyacetone phosphate transaminase Cj1437c from Campylobacter jejuni subsp. jejuni serotype O:2 (strain ATCC 700819 / NCTC 11168).